Here is a 294-residue protein sequence, read N- to C-terminus: Ethanolamine ammonia-lyase small subunit (294 aa).

The adenosylcob(III)alamin site is built by valine 207 and glutamate 228.

This sequence belongs to the EutC family. The basic unit is a heterodimer which dimerizes to form tetramers. The heterotetramers trimerize; 6 large subunits form a core ring with 6 small subunits projecting outwards. Adenosylcob(III)alamin is required as a cofactor.

The protein resides in the bacterial microcompartment. It carries out the reaction ethanolamine = acetaldehyde + NH4(+). It functions in the pathway amine and polyamine degradation; ethanolamine degradation. Functionally, catalyzes the deamination of various vicinal amino-alcohols to oxo compounds. Allows this organism to utilize ethanolamine as the sole source of nitrogen and carbon in the presence of external vitamin B12. The sequence is that of Ethanolamine ammonia-lyase small subunit from Clostridium tetani (strain Massachusetts / E88).